We begin with the raw amino-acid sequence, 530 residues long: Plexin domain-containing protein 2 (530 aa).

The first 30 residues, Met1–Gly30, serve as a signal peptide directing secretion. The Extracellular portion of the chain corresponds to Glu31–Ala455. 2 N-linked (GlcNAc...) asparagine glycosylation sites follow: Asn103 and Asn160. Residues Thr327–Pro372 form the PSI domain. A compositionally biased stretch (basic and acidic residues) spans Lys378–Pro387. The segment at Lys378–Thr399 is disordered. A compositionally biased stretch (low complexity) spans Thr390–Thr399. A helical membrane pass occupies residues Gly456–Val476. Residues Tyr477 to Cys530 lie on the Cytoplasmic side of the membrane. Ser507 is subject to Phosphoserine.

Belongs to the plexin family. As to quaternary structure, interacts with CTTN. As to expression, expressed in tumor endothelium and in vessels of some normal tissues, such as the muscle and lung.

The protein localises to the membrane. Functionally, may play a role in tumor angiogenesis. The sequence is that of Plexin domain-containing protein 2 (Plxdc2) from Mus musculus (Mouse).